We begin with the raw amino-acid sequence, 900 residues long: DNA mismatch repair protein MutS (900 aa).

The segment at 1–88 (MPGPSDDPTE…PAWAHHSQVD (88 aa)) is disordered. Basic and acidic residues predominate over residues 56 to 68 (APADHNAADHDSN). Position 714-721 (714-721 (GPNASGKS)) interacts with ATP.

This sequence belongs to the DNA mismatch repair MutS family.

This protein is involved in the repair of mismatches in DNA. It is possible that it carries out the mismatch recognition step. This protein has a weak ATPase activity. This is DNA mismatch repair protein MutS from Parasynechococcus marenigrum (strain WH8102).